A 453-amino-acid chain; its full sequence is Bifunctional protein GlmU (453 aa).

The pyrophosphorylase stretch occupies residues 1–225; that stretch reads MNIVILAAGT…EWETLGVNSK (225 aa). Residues 6–9, K20, Q71, 76–77, 98–100, G135, E150, N165, and N223 contribute to the UDP-N-acetyl-alpha-D-glucosamine site; these read LAAG, GT, and YGD. D100 is a Mg(2+) binding site. N223 is a Mg(2+) binding site. Positions 226 to 246 are linker; sequence AQLAELERIHQRNVADALLVD. Residues 247-453 are N-acetyltransferase; the sequence is GVTLADPARV…GYVRPVKKKS (207 aa). Residues R329 and K347 each contribute to the UDP-N-acetyl-alpha-D-glucosamine site. The active-site Proton acceptor is H359. UDP-N-acetyl-alpha-D-glucosamine is bound by residues Y362 and N373. Residues A376, 382 to 383, S401, and A419 each bind acetyl-CoA; that span reads NY.

In the N-terminal section; belongs to the N-acetylglucosamine-1-phosphate uridyltransferase family. It in the C-terminal section; belongs to the transferase hexapeptide repeat family. In terms of assembly, homotrimer. Mg(2+) serves as cofactor.

It is found in the cytoplasm. It carries out the reaction alpha-D-glucosamine 1-phosphate + acetyl-CoA = N-acetyl-alpha-D-glucosamine 1-phosphate + CoA + H(+). It catalyses the reaction N-acetyl-alpha-D-glucosamine 1-phosphate + UTP + H(+) = UDP-N-acetyl-alpha-D-glucosamine + diphosphate. It functions in the pathway nucleotide-sugar biosynthesis; UDP-N-acetyl-alpha-D-glucosamine biosynthesis; N-acetyl-alpha-D-glucosamine 1-phosphate from alpha-D-glucosamine 6-phosphate (route II): step 2/2. Its pathway is nucleotide-sugar biosynthesis; UDP-N-acetyl-alpha-D-glucosamine biosynthesis; UDP-N-acetyl-alpha-D-glucosamine from N-acetyl-alpha-D-glucosamine 1-phosphate: step 1/1. It participates in bacterial outer membrane biogenesis; LPS lipid A biosynthesis. In terms of biological role, catalyzes the last two sequential reactions in the de novo biosynthetic pathway for UDP-N-acetylglucosamine (UDP-GlcNAc). The C-terminal domain catalyzes the transfer of acetyl group from acetyl coenzyme A to glucosamine-1-phosphate (GlcN-1-P) to produce N-acetylglucosamine-1-phosphate (GlcNAc-1-P), which is converted into UDP-GlcNAc by the transfer of uridine 5-monophosphate (from uridine 5-triphosphate), a reaction catalyzed by the N-terminal domain. The chain is Bifunctional protein GlmU from Burkholderia ambifaria (strain ATCC BAA-244 / DSM 16087 / CCUG 44356 / LMG 19182 / AMMD) (Burkholderia cepacia (strain AMMD)).